The primary structure comprises 184 residues: Inactive ribonuclease-like protein 9 (184 aa).

The signal sequence occupies residues 1–25; the sequence is MKPLVIKFAWPLPLLLLLLLPPKLQ. 3 disulfides stabilise this stretch: Cys93/Cys148, Cys111/Cys163, and Cys118/Cys125. Asn147 and Asn179 each carry an N-linked (GlcNAc...) asparagine glycan.

This sequence belongs to the pancreatic ribonuclease family.

It is found in the secreted. Does not exhibit any ribonuclease activity. This is Inactive ribonuclease-like protein 9 (Rnase9) from Mus musculus (Mouse).